The sequence spans 488 residues: Cobyric acid synthase (488 aa).

Residues 248 to 441 (VLRVVVPALP…VHGLFDAPDA (194 aa)) enclose the GATase cobBQ-type domain. Cys-328 serves as the catalytic Nucleophile. His-433 is a catalytic residue.

This sequence belongs to the CobB/CobQ family. CobQ subfamily.

It functions in the pathway cofactor biosynthesis; adenosylcobalamin biosynthesis. Catalyzes amidations at positions B, D, E, and G on adenosylcobyrinic A,C-diamide. NH(2) groups are provided by glutamine, and one molecule of ATP is hydrogenolyzed for each amidation. The sequence is that of Cobyric acid synthase from Burkholderia ambifaria (strain ATCC BAA-244 / DSM 16087 / CCUG 44356 / LMG 19182 / AMMD) (Burkholderia cepacia (strain AMMD)).